Reading from the N-terminus, the 102-residue chain is Small ribosomal subunit protein uS10 (102 aa).

The protein belongs to the universal ribosomal protein uS10 family. Part of the 30S ribosomal subunit.

Its function is as follows. Involved in the binding of tRNA to the ribosomes. The protein is Small ribosomal subunit protein uS10 of Allorhizobium ampelinum (strain ATCC BAA-846 / DSM 112012 / S4) (Agrobacterium vitis (strain S4)).